Consider the following 371-residue polypeptide: Cysteine proteinase 1 (371 aa).

The signal sequence occupies residues 1–18 (MAHRVLLLLSLASAAAVA). Residues 19–136 (AAVDAEDPLI…HEAPVLPTDG (118 aa)) constitute a propeptide, activation peptide. 2 disulfide bridges follow: C158/C208 and C192/C241. The active site involves C161. The N-linked (GlcNAc...) asparagine glycan is linked to N254. A disulfide bridge links C297 with C354. Residues H303 and N330 contribute to the active site.

The protein belongs to the peptidase C1 family. Expressed during the late stages of seed ripening, in mature seeds and during germination.

Functionally, involved in the degradation of the storage protein zein. May play a role in proteolysis during emergencies. This Zea mays (Maize) protein is Cysteine proteinase 1 (CCP1).